A 558-amino-acid polypeptide reads, in one-letter code: CTP synthase (558 aa).

Positions 1–267 (MTKFVFVTGG…AQQTLELLNL (267 aa)) are amidoligase domain. CTP is bound at residue Ser-13. A UTP-binding site is contributed by Ser-13. Residues 14 to 19 (SIGKGI) and Asp-71 each bind ATP. Positions 71 and 141 each coordinate Mg(2+). Residues 148 to 150 (DIE), 188 to 193 (KTKPTQ), and Lys-224 contribute to the CTP site. UTP contacts are provided by residues 188–193 (KTKPTQ) and Lys-224. A Glutamine amidotransferase type-1 domain is found at 292–534 (EVALVGKYVQ…VKASVDYNHV (243 aa)). Position 354 (Gly-354) interacts with L-glutamine. Cys-381 functions as the Nucleophile; for glutamine hydrolysis in the catalytic mechanism. L-glutamine contacts are provided by residues 382 to 385 (MGMQ), Glu-405, and Arg-462. Residues His-507 and Glu-509 contribute to the active site.

This sequence belongs to the CTP synthase family. Homotetramer.

The catalysed reaction is UTP + L-glutamine + ATP + H2O = CTP + L-glutamate + ADP + phosphate + 2 H(+). The enzyme catalyses L-glutamine + H2O = L-glutamate + NH4(+). It catalyses the reaction UTP + NH4(+) + ATP = CTP + ADP + phosphate + 2 H(+). The protein operates within pyrimidine metabolism; CTP biosynthesis via de novo pathway; CTP from UDP: step 2/2. Its activity is regulated as follows. Allosterically activated by GTP, when glutamine is the substrate; GTP has no effect on the reaction when ammonia is the substrate. The allosteric effector GTP functions by stabilizing the protein conformation that binds the tetrahedral intermediate(s) formed during glutamine hydrolysis. Inhibited by the product CTP, via allosteric rather than competitive inhibition. Its function is as follows. Catalyzes the ATP-dependent amination of UTP to CTP with either L-glutamine or ammonia as the source of nitrogen. Regulates intracellular CTP levels through interactions with the four ribonucleotide triphosphates. The polypeptide is CTP synthase (Gloeothece citriformis (strain PCC 7424) (Cyanothece sp. (strain PCC 7424))).